We begin with the raw amino-acid sequence, 280 residues long: Lipase chaperone (280 aa).

A helical membrane pass occupies residues 5–22 (ALTIITIALGSLGAVYFL).

The protein belongs to the lipase chaperone family.

It is found in the cell inner membrane. Functionally, may be involved in the folding of the extracellular lipase during its passage through the periplasm. The polypeptide is Lipase chaperone (lifO) (Vibrio vulnificus (strain CMCP6)).